The sequence spans 1193 residues: Probable cation-transporting ATPase 13A4 (1193 aa).

The Cytoplasmic portion of the chain corresponds to 1–32 (MGDHLEKSQHALLNEGDENEMEIFGYRTQGCR). The stretch at 33–53 (KALCLIGSIFSLGMLPLVFYW) is an intramembrane region. At 54-198 (RPAWRVWANC…DVEITPIWKL (145 aa)) the chain is on the cytoplasmic side. Residues 199 to 219 (LIKEVLNPFYIFQLFSVCLWF) traverse the membrane as a helical segment. Residues 220 to 224 (SEDYK) lie on the Lumenal side of the membrane. A helical membrane pass occupies residues 225 to 245 (EYALAIILMSVISIALTVYDL). At 246-401 (RQQSVKLHHL…NFKLYRDAIR (156 aa)) the chain is on the cytoplasmic side. A helical membrane pass occupies residues 402-422 (FLLCLVGTATIGMVYTLCVYV). Topologically, residues 423 to 437 (LSGEPPEEVVRKALD) are lumenal. A helical transmembrane segment spans residues 438 to 458 (VITIAVPPALPAALTTGIIYA). Topologically, residues 459 to 901 (QRRLKKKGIF…KEGRAALVTS (443 aa)) are cytoplasmic. The active-site 4-aspartylphosphate intermediate is the Asp487. Positions 849 and 853 each coordinate Mg(2+). Residues 902–922 (FCMFKYMALYSMIQYVGVLLL) form a helical membrane-spanning segment. The Lumenal segment spans residues 923-933 (YWKTNSLSNYQ). Residues 934–954 (FLFQDLAITTLIGVTMNLNGA) traverse the membrane as a helical segment. Residues 955 to 973 (NPKLVPFRPAGRLISPPLL) lie on the Cytoplasmic side of the membrane. Residues 974–994 (LSVVLNILLSLAMHIVGFILV) form a helical membrane-spanning segment. Residues 995–1036 (QKQPWYIMDYHSVCPVRNESASALAASPSVPEKTRSNSTFAS) lie on the Lumenal side of the membrane. The helical transmembrane segment at 1037-1057 (FENTTIWFLGTINCIFVALVF) threads the bilayer. The Cytoplasmic portion of the chain corresponds to 1058–1071 (SKGKPFRQPTYTNY). A helical transmembrane segment spans residues 1072 to 1092 (IFVLVLILQMGVCLFILFADI). Over 1093-1105 (PEMHRRLDLLCTP) the chain is Lumenal. The helical transmembrane segment at 1106 to 1126 (VLWRVYILIMISSNFVVSLAV) threads the bilayer. Over 1127 to 1193 (EKAIIENRAL…PVFESNEEQL (67 aa)) the chain is Cytoplasmic.

Belongs to the cation transport ATPase (P-type) (TC 3.A.3) family. Type V subfamily. Expressed in brain and stomach.

The protein resides in the early endosome membrane. The protein localises to the late endosome membrane. It localises to the recycling endosome membrane. The enzyme catalyses ATP + H2O = ADP + phosphate + H(+). This chain is Probable cation-transporting ATPase 13A4 (Atp13a4), found in Mus musculus (Mouse).